The chain runs to 136 residues: Nucleoside diphosphate kinase (136 aa).

Residues K10, F58, R86, T92, R104, and N114 each contribute to the ATP site. The Pros-phosphohistidine intermediate role is filled by H117.

It belongs to the NDK family. Homotetramer. Mg(2+) is required as a cofactor.

The protein localises to the cytoplasm. The enzyme catalyses a 2'-deoxyribonucleoside 5'-diphosphate + ATP = a 2'-deoxyribonucleoside 5'-triphosphate + ADP. It carries out the reaction a ribonucleoside 5'-diphosphate + ATP = a ribonucleoside 5'-triphosphate + ADP. Its function is as follows. Major role in the synthesis of nucleoside triphosphates other than ATP. The ATP gamma phosphate is transferred to the NDP beta phosphate via a ping-pong mechanism, using a phosphorylated active-site intermediate. The sequence is that of Nucleoside diphosphate kinase from Corynebacterium efficiens (strain DSM 44549 / YS-314 / AJ 12310 / JCM 11189 / NBRC 100395).